The sequence spans 182 residues: Adenine phosphoribosyltransferase (182 aa).

It belongs to the purine/pyrimidine phosphoribosyltransferase family. As to quaternary structure, homodimer.

The protein resides in the cytoplasm. It carries out the reaction AMP + diphosphate = 5-phospho-alpha-D-ribose 1-diphosphate + adenine. It functions in the pathway purine metabolism; AMP biosynthesis via salvage pathway; AMP from adenine: step 1/1. In terms of biological role, catalyzes a salvage reaction resulting in the formation of AMP, that is energically less costly than de novo synthesis. In Bordetella pertussis (strain Tohama I / ATCC BAA-589 / NCTC 13251), this protein is Adenine phosphoribosyltransferase.